A 261-amino-acid chain; its full sequence is RING-H2 finger protein ATL58 (261 aa).

A helical transmembrane segment spans residues 25-45 (AFIFSVPICFTFIILFLFYLI). The RING-type; atypical zinc finger occupies 100–142 (CSVCLGDYQPNDKLQQIPVCKHTFHMDCIDLWLTSHTTCPLCR). Disordered stretches follow at residues 149–227 (RSRQ…NDGH) and 241–261 (MEEDERNNIGTSSACCSCRTG). Residues 194–221 (SGVSSQPESQPVVNHRGVSSQPESQPVN) are compositionally biased toward polar residues.

This sequence belongs to the RING-type zinc finger family. ATL subfamily.

It localises to the membrane. The catalysed reaction is S-ubiquitinyl-[E2 ubiquitin-conjugating enzyme]-L-cysteine + [acceptor protein]-L-lysine = [E2 ubiquitin-conjugating enzyme]-L-cysteine + N(6)-ubiquitinyl-[acceptor protein]-L-lysine.. The protein operates within protein modification; protein ubiquitination. The protein is RING-H2 finger protein ATL58 (ATL58) of Arabidopsis thaliana (Mouse-ear cress).